A 259-amino-acid polypeptide reads, in one-letter code: Dihydroorotate dehydrogenase B (NAD(+)), electron transfer subunit (259 aa).

Positions 2 to 102 (MQKQNMIVVN…LGPLGHGFPV (101 aa)) constitute an FAD-binding FR-type domain. FAD contacts are provided by residues 53-56 (RPIS), 70-72 (LYR), and 77-78 (GT). Cys221, Cys226, Cys229, and Cys246 together coordinate [2Fe-2S] cluster.

This sequence belongs to the PyrK family. In terms of assembly, heterotetramer of 2 PyrK and 2 PyrD type B subunits. The cofactor is [2Fe-2S] cluster. Requires FAD as cofactor.

It functions in the pathway pyrimidine metabolism; UMP biosynthesis via de novo pathway; orotate from (S)-dihydroorotate (NAD(+) route): step 1/1. In terms of biological role, responsible for channeling the electrons from the oxidation of dihydroorotate from the FMN redox center in the PyrD type B subunit to the ultimate electron acceptor NAD(+). This Bacillus cereus (strain ATCC 14579 / DSM 31 / CCUG 7414 / JCM 2152 / NBRC 15305 / NCIMB 9373 / NCTC 2599 / NRRL B-3711) protein is Dihydroorotate dehydrogenase B (NAD(+)), electron transfer subunit.